Reading from the N-terminus, the 692-residue chain is Elongation factor G (692 aa).

A tr-type G domain is found at 8–283 (DKYRNIGIMA…AVVDYMPSPL (276 aa)). GTP is bound by residues 17–24 (AHIDAGKT), 81–85 (DTPGH), and 135–138 (NKMD).

This sequence belongs to the TRAFAC class translation factor GTPase superfamily. Classic translation factor GTPase family. EF-G/EF-2 subfamily.

The protein resides in the cytoplasm. Catalyzes the GTP-dependent ribosomal translocation step during translation elongation. During this step, the ribosome changes from the pre-translocational (PRE) to the post-translocational (POST) state as the newly formed A-site-bound peptidyl-tRNA and P-site-bound deacylated tRNA move to the P and E sites, respectively. Catalyzes the coordinated movement of the two tRNA molecules, the mRNA and conformational changes in the ribosome. The polypeptide is Elongation factor G (Trichlorobacter lovleyi (strain ATCC BAA-1151 / DSM 17278 / SZ) (Geobacter lovleyi)).